The sequence spans 492 residues: Target of Myb1 membrane trafficking protein (492 aa).

The residue at position 1 (Met-1) is an N-acetylmethionine. Ser-11 bears the Phosphoserine mark. A VHS domain is found at 20 to 152 (ATDGSLQSED…DLRRKGLEFP (133 aa)). Positions 48–56 (KDAFRAVKK) match the KRKK motif. Ser-160 is modified (phosphoserine). At Thr-164 the chain carries Phosphothreonine. Over residues 167-195 (RTVFNSETPSRQNSVSSNTSQRGDLSQHA) the composition is skewed to polar residues. A disordered region spans residues 167-215 (RTVFNSETPSRQNSVSSNTSQRGDLSQHATPLPTPAVLPGDSPITPTPE). Phosphoserine occurs at positions 176, 180, and 208. The 89-residue stretch at 215–303 (EQIGKLRSEL…VFLRHERFER (89 aa)) folds into the GAT domain. The segment at 321–326 (DLIDMG) is clathrin box. Phosphoserine is present on residues Ser-355 and Ser-376. Residue Lys-385 forms a Glycyl lysine isopeptide (Lys-Gly) (interchain with G-Cter in SUMO2) linkage. The interaction with MYO6 stretch occupies residues 392 to 463 (TDGLAGALDA…ADRLPNLASP (72 aa)). The segment at 450–492 (RAKAADRLPNLASPSAEGPPRPSPGTAPRRKTQEKDDDMLFAL) is disordered. A Phosphoserine modification is found at Ser-462.

Belongs to the TOM1 family. In terms of assembly, found in a complex with TOLLIP; interacts (via GAT domain) with TOLLIP (via N-terminus); the interactions leads to TOM1-recruitment to endosomes and inhibition of TOLLIP binding to PtdIns(3)P. Interacts (via GAT domain and the C-terminal part of the VHS domain) with UBC/ubiquitin. Interacts (via clathrin box and C-terminus) with clathrin heavy chain. Interacts with MYO6. Interacts with TAX1BP1; CALCOCO2/NDP52 and OPTN; the interaction is indirect and is mediated by MYO6, which acts as a bridge between TOM1 and the three autophagy receptors. Interacts (via C-terminus) with ZFYVE16 (via C-terminus); interaction is required to target TOM1 and clathrin to endosomes. Interacts with LRBA. Monoubiquitinated. In terms of tissue distribution, ubiquitous. In adult brain, it is highly expressed at the mesencephalic level, in the hippocampal formation and medial lemniscus. In cerebellum, it is highly expressed in Purkinje cells and granular layers.

Its subcellular location is the cytoplasm. It is found in the endosome membrane. The protein resides in the early endosome membrane. Adapter protein that plays a role in the intracellular membrane trafficking of ubiquitinated proteins, thereby participating in autophagy, ubiquitination-dependent signaling and receptor recycling pathways. Acts as a MYO6/Myosin VI adapter protein that targets MYO6 to endocytic structures. Together with MYO6, required for autophagosomal delivery of endocytic cargo, the maturation of autophagosomes and their fusion with lysosomes. MYO6 links TOM1 with autophagy receptors, such as TAX1BP1; CALCOCO2/NDP52 and OPTN. Binds to polyubiquitinated proteins via its GAT domain. In a complex with TOLLIP, recruits ubiquitin-conjugated proteins onto early endosomes. The Tom1-Tollip complex may regulate endosomal trafficking by linking polyubiquitinated proteins to clathrin. Mediates clathrin recruitment to early endosomes by ZFYVE16. Modulates binding of TOLLIP to phosphatidylinositol 3-phosphate (PtdIns(3)P) via binding competition; the association with TOLLIP may favor the release of TOLLIP from endosomal membranes, allowing TOLLIP to commit to cargo trafficking. Acts as a phosphatidylinositol 5-phosphate (PtdIns(5)P) effector by binding to PtdIns(5)P, thereby regulating endosomal maturation. PtdIns(5)P-dependent recruitment to signaling endosomes may block endosomal maturation. Also inhibits Toll-like receptor (TLR) signaling and participates in immune receptor recycling. This Mus musculus (Mouse) protein is Target of Myb1 membrane trafficking protein.